The following is a 98-amino-acid chain: Large ribosomal subunit protein eL21 (98 aa).

The disordered stretch occupies residues 1-24 (MVKMSHGPRSGSRRKLTKSAEERK).

Belongs to the eukaryotic ribosomal protein eL21 family.

The protein is Large ribosomal subunit protein eL21 (rpl21e) of Thermoplasma acidophilum (strain ATCC 25905 / DSM 1728 / JCM 9062 / NBRC 15155 / AMRC-C165).